The following is a 459-amino-acid chain: Cysteine--tRNA ligase (459 aa).

Residue cysteine 31 coordinates Zn(2+). Positions 33–43 (PTVYYNPHIGN) match the 'HIGH' region motif. Residues cysteine 216, histidine 241, and glutamate 245 each coordinate Zn(2+). The short motif at 274–278 (KMSKS) is the 'KMSKS' region element. Residue lysine 277 participates in ATP binding.

The protein belongs to the class-I aminoacyl-tRNA synthetase family. As to quaternary structure, monomer. It depends on Zn(2+) as a cofactor.

It localises to the cytoplasm. The enzyme catalyses tRNA(Cys) + L-cysteine + ATP = L-cysteinyl-tRNA(Cys) + AMP + diphosphate. The sequence is that of Cysteine--tRNA ligase from Rickettsia africae (strain ESF-5).